Here is a 493-residue protein sequence, read N- to C-terminus: Cobyric acid synthase (493 aa).

One can recognise a GATase cobBQ-type domain in the interval Asp252–Trp443. Cys333 acts as the Nucleophile in catalysis. Residue His435 is part of the active site.

This sequence belongs to the CobB/CobQ family. CobQ subfamily.

It functions in the pathway cofactor biosynthesis; adenosylcobalamin biosynthesis. Catalyzes amidations at positions B, D, E, and G on adenosylcobyrinic A,C-diamide. NH(2) groups are provided by glutamine, and one molecule of ATP is hydrogenolyzed for each amidation. The sequence is that of Cobyric acid synthase from Nostoc sp. (strain PCC 7120 / SAG 25.82 / UTEX 2576).